The primary structure comprises 113 residues: Hydrogenase maturation factor HypA (113 aa).

Position 2 (H2) interacts with Ni(2+). Zn(2+) is bound by residues C73, C76, C89, and C92.

The protein belongs to the HypA/HybF family.

Functionally, involved in the maturation of [NiFe] hydrogenases. Required for nickel insertion into the metal center of the hydrogenase. This Azotobacter vinelandii protein is Hydrogenase maturation factor HypA.